The chain runs to 509 residues: ATP synthase subunit alpha (509 aa).

169-176 (GDRQTGKT) lines the ATP pocket.

It belongs to the ATPase alpha/beta chains family. F-type ATPases have 2 components, CF(1) - the catalytic core - and CF(0) - the membrane proton channel. CF(1) has five subunits: alpha(3), beta(3), gamma(1), delta(1), epsilon(1). CF(0) has three main subunits: a(1), b(2) and c(9-12). The alpha and beta chains form an alternating ring which encloses part of the gamma chain. CF(1) is attached to CF(0) by a central stalk formed by the gamma and epsilon chains, while a peripheral stalk is formed by the delta and b chains.

Its subcellular location is the cell inner membrane. The enzyme catalyses ATP + H2O + 4 H(+)(in) = ADP + phosphate + 5 H(+)(out). Functionally, produces ATP from ADP in the presence of a proton gradient across the membrane. The alpha chain is a regulatory subunit. This Parvibaculum lavamentivorans (strain DS-1 / DSM 13023 / NCIMB 13966) protein is ATP synthase subunit alpha.